We begin with the raw amino-acid sequence, 288 residues long: Shikimate dehydrogenase (NADP(+)) (288 aa).

Shikimate is bound by residues S22–S24 and T69. The active-site Proton acceptor is the K73. 2 residues coordinate shikimate: N94 and D110. NADP(+) is bound by residues G131 to A135 and L228. Y230 serves as a coordination point for shikimate. G251 serves as a coordination point for NADP(+).

This sequence belongs to the shikimate dehydrogenase family. Homodimer.

It carries out the reaction shikimate + NADP(+) = 3-dehydroshikimate + NADPH + H(+). The protein operates within metabolic intermediate biosynthesis; chorismate biosynthesis; chorismate from D-erythrose 4-phosphate and phosphoenolpyruvate: step 4/7. Its function is as follows. Involved in the biosynthesis of the chorismate, which leads to the biosynthesis of aromatic amino acids. Catalyzes the reversible NADPH linked reduction of 3-dehydroshikimate (DHSA) to yield shikimate (SA). The protein is Shikimate dehydrogenase (NADP(+)) of Synechococcus sp. (strain JA-2-3B'a(2-13)) (Cyanobacteria bacterium Yellowstone B-Prime).